A 429-amino-acid chain; its full sequence is D-amino acid dehydrogenase (429 aa).

3-17 is a binding site for FAD; that stretch reads VLILGSGVIGTTTAW.

It belongs to the DadA oxidoreductase family. It depends on FAD as a cofactor.

The enzyme catalyses a D-alpha-amino acid + A + H2O = a 2-oxocarboxylate + AH2 + NH4(+). It participates in amino-acid degradation; D-alanine degradation; NH(3) and pyruvate from D-alanine: step 1/1. Functionally, oxidative deamination of D-amino acids. The sequence is that of D-amino acid dehydrogenase from Xanthomonas campestris pv. campestris (strain B100).